The following is a 203-amino-acid chain: Small ribosomal subunit protein uS7A (203 aa).

The protein belongs to the universal ribosomal protein uS7 family. In terms of assembly, component of the small ribosomal subunit (SSU). Mature yeast ribosomes consist of a small (40S) and a large (60S) subunit. The 40S small subunit contains 1 molecule of ribosomal RNA (18S rRNA) and at least 33 different proteins. The large 60S subunit contains 3 rRNA molecules (25S, 5.8S and 5S rRNA) and at least 46 different proteins.

It is found in the cytoplasm. Its subcellular location is the nucleus. The protein resides in the nucleolus. Its function is as follows. Component of the ribosome, a large ribonucleoprotein complex responsible for the synthesis of proteins in the cell. The small ribosomal subunit (SSU) binds messenger RNAs (mRNAs) and translates the encoded message by selecting cognate aminoacyl-transfer RNA (tRNA) molecules. The large subunit (LSU) contains the ribosomal catalytic site termed the peptidyl transferase center (PTC), which catalyzes the formation of peptide bonds, thereby polymerizing the amino acids delivered by tRNAs into a polypeptide chain. The nascent polypeptides leave the ribosome through a tunnel in the LSU and interact with protein factors that function in enzymatic processing, targeting, and the membrane insertion of nascent chains at the exit of the ribosomal tunnel. The chain is Small ribosomal subunit protein uS7A (rps5) from Schizosaccharomyces pombe (strain 972 / ATCC 24843) (Fission yeast).